An 809-amino-acid polypeptide reads, in one-letter code: Sodium/hydrogen exchanger 2 (809 aa).

Helical transmembrane passes span 107–127 (IVPE…IIFG), 138–158 (TDVF…YFMP), 169–189 (IFWY…VSLF), 209–229 (LFGS…FENI), 237–257 (ILVF…YNLF), 278–298 (FFVV…IAAF), and 308–328 (VIEP…AEMF). An N-linked (GlcNAc...) asparagine glycan is attached at Asn-350. Transmembrane regions (helical) follow at residues 361–381 (YFMK…MGVS), 392–412 (AFVC…VFVL), 430–450 (FIIA…FLLP), and 459–479 (LFIT…GITI). 2 stretches are compositionally biased toward basic and acidic residues: residues 648–660 (IRKD…ERRA) and 793–809 (RASE…SDKP). Disordered stretches follow at residues 648–700 (IRKD…EADA) and 734–809 (EVDA…SDKP).

The protein belongs to the monovalent cation:proton antiporter 1 (CPA1) transporter (TC 2.A.36) family. As to quaternary structure, interacts with CHP1 and CHP2. High levels in intestine and kidney. Strongly expressed in gastric epithelial cells, with particularly high expression levels in mucous cells.

It is found in the apical cell membrane. It carries out the reaction Na(+)(in) + H(+)(out) = Na(+)(out) + H(+)(in). Functionally, plasma membrane Na(+)/H(+) antiporter. Mediates the electroneutral exchange of intracellular H(+) ions for extracellular Na(+). Major apical Na(+)/H(+) exchanger in the base of the colonic crypt. Controls in the colonic crypt intracellular pH (pHi) to direct colonic epithelial cell differentiation into the absorptive enterocyte lineage at the expense of the secretory lineage. This Oryctolagus cuniculus (Rabbit) protein is Sodium/hydrogen exchanger 2 (SLC9A2).